A 119-amino-acid chain; its full sequence is MTVNSIGEYTATPRDVQANFNGMQLLYLYWEEHLMYCSALAFLVAPGMPFAEFLEQVLKPAIHAHPDSAKIDFSQALWQLNDQPFTPDYAASLEANGIDHKSMLRLNTPGLNGIQGSCS.

In terms of assembly, the multicomponent enzyme phenol hydroxylase is formed by DmpL (P1 component), DmpM (P2 component), DmpN (P3 component), DmpO (P4 component) and DmpP (P5 component). The oxygenase component is a dimer composed of three subunits, DmpL, DmpN and DmpO (DmpLNO).

It carries out the reaction phenol + NADH + O2 + H(+) = catechol + NAD(+) + H2O. The protein operates within aromatic compound metabolism; phenol degradation. Requires DmpM for efficient turnover. The activity of DmpLNO oxygenase is inhibited by dithiothreitol (DTT) by a mechanism apparently involving H(2)O(2) generation. In terms of biological role, part of a multicomponent enzyme which catalyzes the degradation of phenol and some of its methylated derivatives. DmpL, DmpN and DmpO form the oxygenase component of the complex. Required for growth on phenol and for in vitro phenol hydroxylase activity. The sequence is that of Phenol 2-monooxygenase, oxygenase component DmpO from Pseudomonas sp. (strain CF600).